The primary structure comprises 439 residues: Cysteine--tRNA ligase (439 aa).

C28 provides a ligand contact to Zn(2+). The 'HIGH' region motif lies at 30–40 (ITVYDLCHIGH). 3 residues coordinate Zn(2+): C209, H234, and E238. The 'KMSKS' region signature appears at 266–270 (KMSKS). Residue K269 participates in ATP binding.

Belongs to the class-I aminoacyl-tRNA synthetase family. As to quaternary structure, monomer. Zn(2+) is required as a cofactor.

The protein resides in the cytoplasm. The catalysed reaction is tRNA(Cys) + L-cysteine + ATP = L-cysteinyl-tRNA(Cys) + AMP + diphosphate. The protein is Cysteine--tRNA ligase of Shigella boydii serotype 4 (strain Sb227).